The primary structure comprises 1674 residues: Kinesin-like protein KIF14 (1674 aa).

A required for PRC1-binding region spans residues 1–391 (MSVHTSHSRH…TEPDSLKVEN (391 aa)). 2 disordered regions span residues 132–158 (ETLNPVGGNPGSDSASQASRTEAKGVN) and 171–374 (KDSN…PEEN). Polar residues-rich tracts occupy residues 142–151 (GSDSASQASR) and 202–214 (SRAPVGSQRQTEA). The residue at position 257 (S257) is a Phosphoserine. Phosphothreonine is present on T262. Residues 267–279 (VLEHRWTPRHDPP) show a composition bias toward basic and acidic residues. Over residues 302–311 (TFRSASSESR) the composition is skewed to polar residues. Positions 317-329 (VPEHRWTPRHDLP) are enriched in basic and acidic residues. The interval 391–772 (NSQVTVAVRV…AAQRSNRNID (382 aa)) is required for microtubule-binding with high affinity. Residues 393-736 (QVTVAVRVRP…LRYATQARLI (344 aa)) form the Kinesin motor domain. 482 to 489 (GQTGSGKS) contacts ATP. A coiled-coil region spans residues 743 to 826 (NEDMNAKLIR…QETKELQKAG (84 aa)). An FHA domain is found at 860 to 911 (TTVGKHTPSSSHDIQLSGVLIADDHCTIRNFGGTVSIVPAGEAKTYVNGTHI). The segment at 936-1674 (PVEVQKGKKL…DCTPNRIQWV (739 aa)) is required for CIT-binding. Residues 961 to 1110 (EFAKNELLTA…VQMLQENRGN (150 aa)) are a coiled coil. Phosphoserine is present on residues S973 and S1326. The disordered stretch occupies residues 1618–1674 (GLSKPWESCSSNSKEEQCKSDRADCGKSGPRRACEPHGDATPAVSSGDCTPNRIQWV). Residues 1630–1642 (SKEEQCKSDRADC) are compositionally biased toward basic and acidic residues. Residues 1660–1674 (AVSSGDCTPNRIQWV) are compositionally biased toward polar residues.

Belongs to the TRAFAC class myosin-kinesin ATPase superfamily. Kinesin family. As to quaternary structure, directly interacts with PRC1 within a complex also containing KIF4A, KIF20A and KIF23; targets to the central spindle. Directly interacts with CIT depending on the activation state of the kinase (stronger interaction with the kinase-dead form); targets to the midbody. Interacts with ARRB2; the interaction is detected in the nucleus upon OR1D2 stimulation. Interacts with AKT1; the interaction is detected in the plasma membrane upon INS stimulation and promotes AKT1 phosphorylation. Interacts with SVIL; at midbody during cytokinesis. Interacts with RADIL (via PDZ domain); recruits RADIL to the microtubule network restricting RADIL from interaction with activated RAP1A.

The protein resides in the nucleus. It localises to the cytoplasm. The protein localises to the cytoskeleton. Its subcellular location is the spindle. It is found in the midbody. Microtubule motor protein that binds to microtubules with high affinity through each tubulin heterodimer and has an ATPase activity. Plays a role in many processes like cell division, cytokinesis and also in cell proliferation and apoptosis. During cytokinesis, targets to central spindle and midbody through its interaction with PRC1 and CIT respectively. Regulates cell growth through regulation of cell cycle progression and cytokinesis. During cell cycle progression acts through SCF-dependent proteasomal ubiquitin-dependent protein catabolic process which controls CDKN1B degradation, resulting in positive regulation of cyclins, including CCNE1, CCND1 and CCNB1. During late neurogenesis, regulates the cerebellar and cerebral cortex development and olfactory bulb development through regulation of apoptosis, cell proliferation and cell division. Also is required for chromosome congression and alignment during mitotic cell cycle process. Regulates cell spreading, focal adhesion dynamics, and cell migration through its interaction with RADIL resulting in regulation of RAP1A-mediated inside-out integrin activation by tethering RADIL on microtubules. The sequence is that of Kinesin-like protein KIF14 from Mus musculus (Mouse).